The sequence spans 236 residues: UPF0177 protein YaiH (236 aa).

A run of 6 helical transmembrane segments spans residues 16–36 (YFSL…ILGY), 51–71 (ATAT…GILI), 90–110 (ILFL…TFTY), 131–151 (IVFP…FEEA), 180–200 (TGAN…TLIY), and 210–230 (ILVH…LQTI).

Belongs to the UPF0177 family.

The protein resides in the cell membrane. The polypeptide is UPF0177 protein YaiH (yaiH) (Lactococcus lactis subsp. lactis (strain IL1403) (Streptococcus lactis)).